The chain runs to 650 residues: Protein ANTI-SILENCING 1 (650 aa).

The BAH domain occupies 38 to 169 (DEYRLYDCVL…VGSCKVVDTI (132 aa)). Disordered regions lie at residues 202 to 223 (NGKSDSLKPNGPLARGASGSVR), 229 to 248 (AFESSDCKENSNGCKEEKEK), 257 to 359 (KSTL…QKLD), and 425 to 448 (VTEKGISKKPSFGRAEDKMSADDN). Composition is skewed to basic and acidic residues over residues 259-270 (TLAEERSNKDSG) and 277-287 (NGKDQESEVKK). Polar residues predominate over residues 302-315 (SNSFEASGSRTIHS). Composition is skewed to basic and acidic residues over residues 348–358 (LDDRPLKKQKL) and 438–448 (RAEDKMSADDN). The region spanning 486–569 (TVVLLQNLDP…RPLVASFAKI (84 aa)) is the RRM domain.

In terms of assembly, component of the ASI1-AIPP1-EDM2 (AAE) RNA regulatory complex composed of at least AIPP1/EDM3, ASI1 and EDM2 and may contain CPL2, AIPP2 and AIPP3/BDT1. Binds directly to AIPP1/EDM3 and AIPP2.

Its function is as follows. Collaboratively with AIPP1/EDM3 and EDM2, the AAE complex regulates alternative RNA processing (e.g. alternative splicing) and epigenetic silencing (e.g. H3K9me2) of intronic heterochromatin-containing genes as well as genic heterochromatin-containing genes by promoting distal 3' polyadenylation; may associate with intronic heterochromatin and bind gene transcripts to modulate polyadenylation. Required to prevent promoter DNA hypermethylation and transcriptional silencing of some transgenes. Plays a similar role to that of the histone H3K9 demethylase JMJ25/IBM1 in preventing CHG methylation in the bodies of numerous genes. RNA-binding protein that ensures the proper expression of JMJ25/IBM1 full-length transcript by associating with an intronic heterochromatic repeat element of JMJ25/IBM1. Also modulates transposable elements (TE) expression. Contributes to a unique mechanism to deal with the collateral effect of silencing intronic repeat elements. This Arabidopsis thaliana (Mouse-ear cress) protein is Protein ANTI-SILENCING 1.